A 290-amino-acid chain; its full sequence is Bifunctional protein FolD 3 (290 aa).

Residues 163-165 (GHS) and Ile229 each bind NADP(+).

Belongs to the tetrahydrofolate dehydrogenase/cyclohydrolase family. In terms of assembly, homodimer.

It carries out the reaction (6R)-5,10-methylene-5,6,7,8-tetrahydrofolate + NADP(+) = (6R)-5,10-methenyltetrahydrofolate + NADPH. The catalysed reaction is (6R)-5,10-methenyltetrahydrofolate + H2O = (6R)-10-formyltetrahydrofolate + H(+). The protein operates within one-carbon metabolism; tetrahydrofolate interconversion. Its function is as follows. Catalyzes the oxidation of 5,10-methylenetetrahydrofolate to 5,10-methenyltetrahydrofolate and then the hydrolysis of 5,10-methenyltetrahydrofolate to 10-formyltetrahydrofolate. The protein is Bifunctional protein FolD 3 of Roseobacter denitrificans (strain ATCC 33942 / OCh 114) (Erythrobacter sp. (strain OCh 114)).